A 412-amino-acid polypeptide reads, in one-letter code: uncharacterized protein (412 aa).

The region spanning Phe20–Gly199 is the UmuC domain.

Belongs to the DNA polymerase type-Y family.

This is an uncharacterized protein from Mycoplasma pneumoniae (strain ATCC 29342 / M129 / Subtype 1) (Mycoplasmoides pneumoniae).